Consider the following 389-residue polypeptide: Galactokinase (389 aa).

Substrate is bound at residue 34–37 (EHTD). Residues serine 68 and 125–131 (GSGLSSS) each bind ATP. Residues serine 131 and glutamate 163 each contribute to the Mg(2+) site. The active-site Proton acceptor is aspartate 175. Residue tyrosine 225 coordinates substrate.

Belongs to the GHMP kinase family. GalK subfamily.

The protein localises to the cytoplasm. The enzyme catalyses alpha-D-galactose + ATP = alpha-D-galactose 1-phosphate + ADP + H(+). It functions in the pathway carbohydrate metabolism; galactose metabolism. Its function is as follows. Catalyzes the transfer of the gamma-phosphate of ATP to D-galactose to form alpha-D-galactose-1-phosphate (Gal-1-P). This chain is Galactokinase, found in Clostridium beijerinckii (strain ATCC 51743 / NCIMB 8052) (Clostridium acetobutylicum).